Consider the following 459-residue polypeptide: ATP synthase subunit beta (459 aa).

Residue 148 to 155 (GGAGVGKT) coordinates ATP.

The protein belongs to the ATPase alpha/beta chains family. In terms of assembly, F-type ATPases have 2 components, CF(1) - the catalytic core - and CF(0) - the membrane proton channel. CF(1) has five subunits: alpha(3), beta(3), gamma(1), delta(1), epsilon(1). CF(0) has three main subunits: a(1), b(2) and c(9-12). The alpha and beta chains form an alternating ring which encloses part of the gamma chain. CF(1) is attached to CF(0) by a central stalk formed by the gamma and epsilon chains, while a peripheral stalk is formed by the delta and b chains.

It localises to the cell inner membrane. The catalysed reaction is ATP + H2O + 4 H(+)(in) = ADP + phosphate + 5 H(+)(out). Produces ATP from ADP in the presence of a proton gradient across the membrane. The catalytic sites are hosted primarily by the beta subunits. This Cellvibrio japonicus (strain Ueda107) (Pseudomonas fluorescens subsp. cellulosa) protein is ATP synthase subunit beta.